The following is a 324-amino-acid chain: IDS-like terpene synthase 3 (324 aa).

Asp-77 and Asp-81 together coordinate Mg(2+).

This sequence belongs to the FPP/GGPP synthase family. The cofactor is Mg(2+).

The enzyme catalyses (2E)-geranyl diphosphate + H2O = linalool + diphosphate. It carries out the reaction (2E,6E)-farnesyl diphosphate + H2O = (6E)-nerolidol + diphosphate. In terms of biological role, terpene synthase that shows monoterpene synthase activity and produces linalool, using geranyl diphosphate (GPP) as substrate. Also shows sesquiterpene synthase activity as it is able to convert farnesyl diphosphate (FPP) into (E)-nerolidol. This is IDS-like terpene synthase 3 from Melampsora lini (Rust fungus).